A 20-amino-acid polypeptide reads, in one-letter code: U27-ctenitoxin-Pn1a (20 aa).

The segment at 1-20 (LAKRADICQPGKTSQRACET) is disordered. Residues 11-20 (GKTSQRACET) show a composition bias toward polar residues.

Post-translationally, contains 4 disulfide bonds. Expressed by the venom gland.

Its subcellular location is the secreted. Functionally, has a vascular smooth muscle contracting activity. Causes short-lived contractions of both arterial and venous rabbit vessels. The chain is U27-ctenitoxin-Pn1a from Phoneutria nigriventer (Brazilian armed spider).